Reading from the N-terminus, the 505-residue chain is Envelope glycoprotein C homolog (505 aa).

The signal sequence occupies residues 1–27; sequence MLTPRVLRALGWTGLFFLLLSPSNVLG. The Virion surface portion of the chain corresponds to 28 to 464; sequence ASLSRDLEHP…DATPSARGTP (437 aa). N-linked (GlcNAc...) asparagine; by host glycosylation is present at N45. Residues 51 to 85 form a disordered region; that stretch reads APLTEVPHAPSTESVSTNSESTNEHTITETTGKNA. Residues 61-71 are compositionally biased toward low complexity; it reads STESVSTNSES. Residues N90, N99, N119, N211, N353, N399, and N428 are each glycosylated (N-linked (GlcNAc...) asparagine; by host). Residues 257–355 enclose the Ig-like domain; sequence PASVDVLAPP…GDMISTTNAT (99 aa). Residues 465–491 form a helical membrane-spanning segment; it reads MVITVNGSFGIGCNFRVGDNHDCPMFI. The Cytoplasmic segment spans residues 492 to 505; the sequence is HSTRKIFDYNLIVM.

The protein belongs to the herpesviridae glycoprotein C family.

The protein localises to the secreted. Its subcellular location is the host cell membrane. Its function is as follows. May play an immunoevasive role in the pathogenesis of Marek's disease. It is a candidate for causing the early-stage immunosuppression that occurs after MDHV infection. The sequence is that of Envelope glycoprotein C homolog (gC) from Gallid herpesvirus 2 (strain GA) (GaHV-2).